The primary structure comprises 264 residues: tRNA pseudouridine synthase A (264 aa).

Asp-51 functions as the Nucleophile in the catalytic mechanism. Tyr-109 contributes to the substrate binding site.

This sequence belongs to the tRNA pseudouridine synthase TruA family. As to quaternary structure, homodimer.

It catalyses the reaction uridine(38/39/40) in tRNA = pseudouridine(38/39/40) in tRNA. Its function is as follows. Formation of pseudouridine at positions 38, 39 and 40 in the anticodon stem and loop of transfer RNAs. The polypeptide is tRNA pseudouridine synthase A (Actinobacillus succinogenes (strain ATCC 55618 / DSM 22257 / CCUG 43843 / 130Z)).